Here is a 407-residue protein sequence, read N- to C-terminus: Phosphopentomutase (407 aa).

Residues aspartate 10, aspartate 306, histidine 311, aspartate 347, histidine 348, and histidine 359 each coordinate Mn(2+).

Belongs to the phosphopentomutase family. Requires Mn(2+) as cofactor.

The protein localises to the cytoplasm. The enzyme catalyses 2-deoxy-alpha-D-ribose 1-phosphate = 2-deoxy-D-ribose 5-phosphate. It carries out the reaction alpha-D-ribose 1-phosphate = D-ribose 5-phosphate. It functions in the pathway carbohydrate degradation; 2-deoxy-D-ribose 1-phosphate degradation; D-glyceraldehyde 3-phosphate and acetaldehyde from 2-deoxy-alpha-D-ribose 1-phosphate: step 1/2. In terms of biological role, isomerase that catalyzes the conversion of deoxy-ribose 1-phosphate (dRib-1-P) and ribose 1-phosphate (Rib-1-P) to deoxy-ribose 5-phosphate (dRib-5-P) and ribose 5-phosphate (Rib-5-P), respectively. This is Phosphopentomutase from Escherichia coli (strain UTI89 / UPEC).